We begin with the raw amino-acid sequence, 451 residues long: Exodeoxyribonuclease 7 large subunit (451 aa).

This sequence belongs to the XseA family. As to quaternary structure, heterooligomer composed of large and small subunits.

The protein resides in the cytoplasm. The enzyme catalyses Exonucleolytic cleavage in either 5'- to 3'- or 3'- to 5'-direction to yield nucleoside 5'-phosphates.. Bidirectionally degrades single-stranded DNA into large acid-insoluble oligonucleotides, which are then degraded further into small acid-soluble oligonucleotides. This Thiobacillus denitrificans (strain ATCC 25259 / T1) protein is Exodeoxyribonuclease 7 large subunit.